Consider the following 226-residue polypeptide: UPF0758 protein Spy49_0870 (226 aa).

In terms of domain architecture, MPN spans 103–225 (SVLTSVQVAE…YYSFREKSTL (123 aa)). Positions 174, 176, and 187 each coordinate Zn(2+). The JAMM motif signature appears at 174 to 187 (HNHPSGNIEPSSND).

It belongs to the UPF0758 family.

This Streptococcus pyogenes serotype M49 (strain NZ131) protein is UPF0758 protein Spy49_0870.